The primary structure comprises 149 residues: Deoxyuridine 5'-triphosphate nucleotidohydrolase (149 aa).

Residues 68-70, Asn81, and 85-87 contribute to the substrate site; these read RSG and LID.

This sequence belongs to the dUTPase family. Requires Mg(2+) as cofactor.

The catalysed reaction is dUTP + H2O = dUMP + diphosphate + H(+). It participates in pyrimidine metabolism; dUMP biosynthesis; dUMP from dCTP (dUTP route): step 2/2. Its function is as follows. This enzyme is involved in nucleotide metabolism: it produces dUMP, the immediate precursor of thymidine nucleotides and it decreases the intracellular concentration of dUTP so that uracil cannot be incorporated into DNA. This Nitrosospira multiformis (strain ATCC 25196 / NCIMB 11849 / C 71) protein is Deoxyuridine 5'-triphosphate nucleotidohydrolase.